The following is a 316-amino-acid chain: Ninja-family protein 2 (316 aa).

Disordered stretches follow at residues 1 to 29 (MASRDFLGRFGGEKGSSSDKAGGGAGEPD) and 72 to 236 (TSDD…TSTG). Basic and acidic residues predominate over residues 99-108 (ERWRRREMQS). The segment covering 156–166 (DQGNTSSSMPE) has biased composition (polar residues). 2 stretches are compositionally biased toward low complexity: residues 179 to 199 (SSMEISSDNNNNNNASNQNKS) and 222 to 235 (LRTLRSLTMRTTST).

It belongs to the Ninja family.

The protein localises to the nucleus. This chain is Ninja-family protein 2 (AFP-B1), found in Triticum aestivum (Wheat).